A 170-amino-acid chain; its full sequence is Putative phosphoesterase OB1230 (170 aa).

The Proton donor role is filled by His-34. Short sequence motifs (HXTX) lie at residues 34 to 37 (HLTL) and 115 to 118 (HITI). His-115 serves as the catalytic Proton acceptor.

It belongs to the 2H phosphoesterase superfamily. YjcG family.

The protein is Putative phosphoesterase OB1230 of Oceanobacillus iheyensis (strain DSM 14371 / CIP 107618 / JCM 11309 / KCTC 3954 / HTE831).